We begin with the raw amino-acid sequence, 451 residues long: NADH-quinone oxidoreductase subunit H (451 aa).

9 helical membrane passes run 30–50, 98–118, 138–158, 176–196, 213–233, 262–282, 302–322, 336–356, and 368–388; these read LIIVKTLGVFAFLVLATLFMI, AVFILAPVISATPAFLAFAVI, LPVAVLFVLAMSSLGVYGIVL, AAQVVSYEIAMGLSFVGVFLY, WGILWAGVSFAVYAIAMVGET, LFYLAEYINMVTVSALMTTLF, WWPVLWFLIKLGIVLFVFIWL, QFGWKVLIPVNLTWILVEAAI, and VIPFAIFLALVAVGTYVADLV.

Belongs to the complex I subunit 1 family. As to quaternary structure, NDH-1 is composed of 14 different subunits. Subunits NuoA, H, J, K, L, M, N constitute the membrane sector of the complex.

Its subcellular location is the cell membrane. It catalyses the reaction a quinone + NADH + 5 H(+)(in) = a quinol + NAD(+) + 4 H(+)(out). Functionally, NDH-1 shuttles electrons from NADH, via FMN and iron-sulfur (Fe-S) centers, to quinones in the respiratory chain. The immediate electron acceptor for the enzyme in this species is believed to be ubiquinone. Couples the redox reaction to proton translocation (for every two electrons transferred, four hydrogen ions are translocated across the cytoplasmic membrane), and thus conserves the redox energy in a proton gradient. This subunit may bind ubiquinone. In Acidothermus cellulolyticus (strain ATCC 43068 / DSM 8971 / 11B), this protein is NADH-quinone oxidoreductase subunit H.